We begin with the raw amino-acid sequence, 454 residues long: Mitochondrial distribution and morphology protein 10 (454 aa).

It belongs to the MDM10 family. Component of the ER-mitochondria encounter structure (ERMES) or MDM complex, composed of MMM1, MDM10, MDM12 and MDM34. Associates with the mitochondrial outer membrane sorting assembly machinery SAM(core) complex.

It is found in the mitochondrion outer membrane. Its function is as follows. Component of the ERMES/MDM complex, which serves as a molecular tether to connect the endoplasmic reticulum and mitochondria. Components of this complex are involved in the control of mitochondrial shape and protein biogenesis and may function in phospholipid exchange. MDM10 is involved in the late assembly steps of the general translocase of the mitochondrial outer membrane (TOM complex). Functions in the TOM40-specific route of the assembly of outer membrane beta-barrel proteins, including the association of TOM40 with the receptor TOM22 and small TOM proteins. Can associate with the SAM(core) complex as well as the MDM12-MMM1 complex, both involved in late steps of the major beta-barrel assembly pathway, that is responsible for biogenesis of all outer membrane beta-barrel proteins. May act as a switch that shuttles between both complexes and channels precursor proteins into the TOM40-specific pathway. Plays a role in mitochondrial morphology and in the inheritance of mitochondria. The chain is Mitochondrial distribution and morphology protein 10 from Candida tropicalis (strain ATCC MYA-3404 / T1) (Yeast).